The following is a 190-amino-acid chain: Ras-related protein RabF1 (190 aa).

15 to 22 contacts GTP; the sequence is GDSGVGKT. Positions 37–44 match the Effector region motif; sequence HITIGIEF. GTP-binding positions include 62-66 and 119-122; these read DTAGE and NKND. C187 bears the Cysteine methyl ester mark. C187 carries the S-geranylgeranyl cysteine lipid modification. A propeptide spans 188 to 190 (removed in mature form); that stretch reads IIN.

It belongs to the small GTPase superfamily. Rab family.

The protein resides in the cell membrane. This chain is Ras-related protein RabF1 (rabF1-1), found in Dictyostelium discoideum (Social amoeba).